Consider the following 235-residue polypeptide: 2-C-methyl-D-erythritol 4-phosphate cytidylyltransferase (235 aa).

This sequence belongs to the IspD/TarI cytidylyltransferase family. IspD subfamily. As to quaternary structure, homodimer.

The catalysed reaction is 2-C-methyl-D-erythritol 4-phosphate + CTP + H(+) = 4-CDP-2-C-methyl-D-erythritol + diphosphate. Its pathway is isoprenoid biosynthesis; isopentenyl diphosphate biosynthesis via DXP pathway; isopentenyl diphosphate from 1-deoxy-D-xylulose 5-phosphate: step 2/6. Catalyzes the formation of 4-diphosphocytidyl-2-C-methyl-D-erythritol from CTP and 2-C-methyl-D-erythritol 4-phosphate (MEP). The polypeptide is 2-C-methyl-D-erythritol 4-phosphate cytidylyltransferase (Serratia proteamaculans (strain 568)).